A 134-amino-acid polypeptide reads, in one-letter code: Profilin-2 (134 aa).

C13 and C118 are oxidised to a cystine. Residues 84–100 (AVIRGKKGSGGITIKKT) carry the Involved in PIP2 interaction motif. Position 114 is a phosphothreonine (T114).

This sequence belongs to the profilin family. As to quaternary structure, occurs in many kinds of cells as a complex with monomeric actin in a 1:1 ratio. Phosphorylated by MAP kinases.

The protein resides in the cytoplasm. It localises to the cytoskeleton. Functionally, binds to actin and affects the structure of the cytoskeleton. At high concentrations, profilin prevents the polymerization of actin, whereas it enhances it at low concentrations. This Olea europaea (Common olive) protein is Profilin-2.